The following is a 217-amino-acid chain: uncharacterized protein (217 aa).

The disordered stretch occupies residues 1–32 (MTLKKHRGKMSEKSNVNKKFTNSTQNNSNWSN). A compositionally biased stretch (low complexity) spans 22–32 (NSTQNNSNWSN).

This is an uncharacterized protein from Acidianus filamentous virus 2 (isolate Italy/Pozzuoli) (AFV-2).